The following is a 188-amino-acid chain: Xanthine phosphoribosyltransferase (188 aa).

Xanthine is bound by residues leucine 20 and asparagine 27. 5-phospho-alpha-D-ribose 1-diphosphate is bound at residue 127–131 (AYGNA). Lysine 155 serves as a coordination point for xanthine.

It belongs to the purine/pyrimidine phosphoribosyltransferase family. Xpt subfamily. In terms of assembly, homodimer.

The protein resides in the cytoplasm. The catalysed reaction is XMP + diphosphate = xanthine + 5-phospho-alpha-D-ribose 1-diphosphate. The protein operates within purine metabolism; XMP biosynthesis via salvage pathway; XMP from xanthine: step 1/1. Its function is as follows. Converts the preformed base xanthine, a product of nucleic acid breakdown, to xanthosine 5'-monophosphate (XMP), so it can be reused for RNA or DNA synthesis. The protein is Xanthine phosphoribosyltransferase of Parabacteroides distasonis (strain ATCC 8503 / DSM 20701 / CIP 104284 / JCM 5825 / NCTC 11152).